Consider the following 238-residue polypeptide: Ribosomal RNA small subunit methyltransferase G (238 aa).

S-adenosyl-L-methionine-binding positions include G77, F82, 128 to 129 (AE), and R147.

Belongs to the methyltransferase superfamily. RNA methyltransferase RsmG family.

It is found in the cytoplasm. Specifically methylates the N7 position of guanine in position 535 of 16S rRNA. This Listeria monocytogenes serotype 4b (strain CLIP80459) protein is Ribosomal RNA small subunit methyltransferase G.